Here is a 464-residue protein sequence, read N- to C-terminus: 3-isopropylmalate dehydratase large subunit (464 aa).

3 residues coordinate [4Fe-4S] cluster: Cys345, Cys405, and Cys408.

It belongs to the aconitase/IPM isomerase family. LeuC type 1 subfamily. In terms of assembly, heterodimer of LeuC and LeuD. Requires [4Fe-4S] cluster as cofactor.

The catalysed reaction is (2R,3S)-3-isopropylmalate = (2S)-2-isopropylmalate. Its pathway is amino-acid biosynthesis; L-leucine biosynthesis; L-leucine from 3-methyl-2-oxobutanoate: step 2/4. In terms of biological role, catalyzes the isomerization between 2-isopropylmalate and 3-isopropylmalate, via the formation of 2-isopropylmaleate. This chain is 3-isopropylmalate dehydratase large subunit, found in Flavobacterium johnsoniae (strain ATCC 17061 / DSM 2064 / JCM 8514 / BCRC 14874 / CCUG 350202 / NBRC 14942 / NCIMB 11054 / UW101) (Cytophaga johnsonae).